The primary structure comprises 216 residues: Squamosa promoter-binding-like protein 13 (216 aa).

A disordered region spans residues 32 to 110; that stretch reads GDGGAALPSP…PSGGGGGPRC (79 aa). Low complexity predominate over residues 67–91; sequence SSSAAVAAGASSSSSSSSVAAAARR. Residues 94-108 are compositionally biased toward gly residues; the sequence is GRAGGGAPSGGGGGP. The segment at 107 to 184 adopts an SBP-type zinc-finger fold; it reads GPRCQVERCG…AGHNERRRKS (78 aa). Residues C110, C115, C132, H135, C151, C154, H158, and C170 each contribute to the Zn(2+) site. Residues 167–183 carry the Bipartite nuclear localization signal motif; sequence KRSCRRRLAGHNERRRK. The disordered stretch occupies residues 175 to 216; sequence AGHNERRRKSAADTAHGENCRHADQDAGRSHQGTGNPPFQIR. A compositionally biased stretch (basic and acidic residues) spans 189 to 203; that stretch reads AHGENCRHADQDAGR. Polar residues predominate over residues 205–216; sequence HQGTGNPPFQIR.

As to expression, ubiquitous.

The protein resides in the nucleus. In terms of biological role, trans-acting factor that binds specifically to the consensus nucleotide sequence 5'-TNCGTACAA-3'. May be involved in panicle development. This Oryza sativa subsp. japonica (Rice) protein is Squamosa promoter-binding-like protein 13 (SPL13).